Reading from the N-terminus, the 138-residue chain is Small ribosomal subunit protein uS11c (138 aa).

Residues M1–N21 form a disordered region. The span at G9–N21 shows a compositional bias: basic residues.

It belongs to the universal ribosomal protein uS11 family. In terms of assembly, part of the 30S ribosomal subunit.

It localises to the plastid. The protein localises to the chloroplast. The chain is Small ribosomal subunit protein uS11c from Calycanthus floridus var. glaucus (Eastern sweetshrub).